Consider the following 302-residue polypeptide: Taste receptor type 2 member 104 (302 aa).

The Extracellular segment spans residues 1–7 (MLSALES). Residues 8 to 28 (ILLSVATSEAMLGVLGNTFIV) form a helical membrane-spanning segment. Topologically, residues 29-43 (LVNYTDWVRNKKLSK) are cytoplasmic. A helical membrane pass occupies residues 44–64 (INFILTGLAISRIFTIWIITL). The Extracellular portion of the chain corresponds to 65 to 87 (DAYTKVFLLTMLMPSSLHECMSY). The chain crosses the membrane as a helical span at residues 88–108 (IWVIINHLSVWFSTSLGIFYF). Over 109 to 128 (LKIANFSHYIFLWMKRRADK) the chain is Cytoplasmic. A helical transmembrane segment spans residues 129–149 (VFVFLIVFLIITWLASFPLAV). At 150 to 182 (KVIKDVKIYQSNTSWLIHLEKSELLINYVFANM) the chain is on the extracellular side. A glycan (N-linked (GlcNAc...) asparagine) is linked at Asn-161. Residues 183-203 (GPISLFIVAIIACFLLTISLW) form a helical membrane-spanning segment. Topologically, residues 204-229 (RHSRQMQSIGSGFRDLNTEAHMKAMK) are cytoplasmic. The helical transmembrane segment at 230-250 (VLIAFIILFILYFLGILIETL) threads the bilayer. The Extracellular segment spans residues 251 to 259 (CLFLTNNKL). The helical transmembrane segment at 260-280 (LFIFGFTLSAMYPCCHSFILI) threads the bilayer. Over 281–302 (LTSRELKQATMRALQRLKCCET) the chain is Cytoplasmic.

Belongs to the G-protein coupled receptor T2R family.

Its subcellular location is the membrane. Its function is as follows. Putative taste receptor which may play a role in the perception of bitterness. This Mus musculus (Mouse) protein is Taste receptor type 2 member 104.